The primary structure comprises 24 residues: Large ribosomal subunit protein uL10 (24 aa).

Belongs to the universal ribosomal protein uL10 family. In terms of assembly, part of the ribosomal stalk of the 50S ribosomal subunit. The N-terminus interacts with L11 and the large rRNA to form the base of the stalk. The C-terminus forms an elongated spine to which L12 dimers bind in a sequential fashion forming a multimeric L10(L12)X complex.

Functionally, forms part of the ribosomal stalk, playing a central role in the interaction of the ribosome with GTP-bound translation factors. The protein is Large ribosomal subunit protein uL10 (rplJ) of Enterobacter cloacae.